We begin with the raw amino-acid sequence, 289 residues long: Phosphatidylglycerol--prolipoprotein diacylglyceryl transferase (289 aa).

7 helical membrane-spanning segments follow: residues 23-43, 61-81, 99-119, 125-145, 199-219, 226-246, and 259-279; these read ALHW…WLAV, LLYM…VLFY, GGMS…WFAH, FFQV…AGRL, SQLY…NLFI, GSVS…TEFF, and LFSM…LMMV. Position 144 (Arg-144) interacts with a 1,2-diacyl-sn-glycero-3-phospho-(1'-sn-glycerol).

It belongs to the Lgt family.

Its subcellular location is the cell inner membrane. It carries out the reaction L-cysteinyl-[prolipoprotein] + a 1,2-diacyl-sn-glycero-3-phospho-(1'-sn-glycerol) = an S-1,2-diacyl-sn-glyceryl-L-cysteinyl-[prolipoprotein] + sn-glycerol 1-phosphate + H(+). Its pathway is protein modification; lipoprotein biosynthesis (diacylglyceryl transfer). Functionally, catalyzes the transfer of the diacylglyceryl group from phosphatidylglycerol to the sulfhydryl group of the N-terminal cysteine of a prolipoprotein, the first step in the formation of mature lipoproteins. This is Phosphatidylglycerol--prolipoprotein diacylglyceryl transferase from Pectobacterium atrosepticum (strain SCRI 1043 / ATCC BAA-672) (Erwinia carotovora subsp. atroseptica).